The following is a 591-amino-acid chain: Heterogeneous nuclear ribonucleoprotein L-like (591 aa).

Residues 1–120 (MSSSSSSSPK…STEGGGSHHK (120 aa)) are disordered. Positions 20–31 (FESQAKRLKTEE) are enriched in basic and acidic residues. Lysine 28 participates in a covalent cross-link: Glycyl lysine isopeptide (Lys-Gly) (interchain with G-Cter in SUMO2). Serine 37 bears the Phosphoserine mark. Threonine 48 carries the post-translational modification Phosphothreonine. Residues 57–73 (SGGGDGGDGDGGSGGGG) show a composition bias toward gly residues. The span at 74–91 (DGEEGEGGEEGDEGDGDE) shows a compositional bias: acidic residues. The segment covering 92–105 (GGSGGDEGGSGGGP) has biased composition (gly residues). Serine 107, serine 117, and serine 124 each carry phosphoserine. RRM domains are found at residues 125–199 (PVVH…YSTS), 215–293 (NKVL…YARP), and 384–458 (SVVM…VSKQ). Lysine 540 participates in a covalent cross-link: Glycyl lysine isopeptide (Lys-Gly) (interchain with G-Cter in SUMO2).

In terms of assembly, interacts with HNRNPL.

RNA-binding protein that functions as a regulator of alternative splicing for multiple target mRNAs, including PTPRC/CD45 and STAT5A. Required for alternative splicing of PTPRC. The polypeptide is Heterogeneous nuclear ribonucleoprotein L-like (Hnrnpll) (Mus musculus (Mouse)).